The sequence spans 280 residues: Lacto-N-neotetraose biosynthesis glycosyltransferase LgtE (280 aa).

Belongs to the glycosyltransferase 25 family.

It functions in the pathway glycan metabolism; lacto-N-neotetraose biosynthesis. Its pathway is bacterial outer membrane biogenesis; lipooligosaccharide biosynthesis. Adds the first galactose to the lacto-N-tetraose chain in lipooligosaccharide (LOS). The chain is Lacto-N-neotetraose biosynthesis glycosyltransferase LgtE (lgtE) from Neisseria gonorrhoeae.